Here is a 200-residue protein sequence, read N- to C-terminus: MIVLGLTGSIGMGKTTAAGMFAEAGVPVYSADDAVHRLYSGRAAPLIEATFPGTVENGIVNREKLFKAVIGQPEAIKKLEAVVHPLVREEEDAFRREAEKSGAAIALVDIPLLFETGAEKRVDKVVVVSAPADIQHTRVLARPGMTQEKLKAILVRQIPDAEKRSRADFVLDTSGSFDDLRRQIAEIITGLSGKPAAATR.

Residues 3–200 (VLGLTGSIGM…LSGKPAAATR (198 aa)) form the DPCK domain. 11-16 (GMGKTT) is an ATP binding site.

It belongs to the CoaE family.

It is found in the cytoplasm. The catalysed reaction is 3'-dephospho-CoA + ATP = ADP + CoA + H(+). Its pathway is cofactor biosynthesis; coenzyme A biosynthesis; CoA from (R)-pantothenate: step 5/5. Its function is as follows. Catalyzes the phosphorylation of the 3'-hydroxyl group of dephosphocoenzyme A to form coenzyme A. This Brucella melitensis biotype 1 (strain ATCC 23456 / CCUG 17765 / NCTC 10094 / 16M) protein is Dephospho-CoA kinase.